The following is a 345-amino-acid chain: Tropomodulin-4 (345 aa).

Residues 42–63 (NMLLPAGLRQRDQTKKSPTGPL) form a disordered region.

It belongs to the tropomodulin family. As to quaternary structure, binds to the N-terminus of tropomyosin and to actin. Highly expressed in skeletal muscle.

It is found in the cytoplasm. The protein localises to the cytoskeleton. Functionally, blocks the elongation and depolymerization of the actin filaments at the pointed end. The Tmod/TM complex contributes to the formation of the short actin protofilament, which in turn defines the geometry of the membrane skeleton. The chain is Tropomodulin-4 (TMOD4) from Homo sapiens (Human).